Here is an 85-residue protein sequence, read N- to C-terminus: Omega-conotoxin-like Am6.5 (85 aa).

A signal peptide spans 1–19 (MCILIVAVLFLTAWTFVMA). The propeptide occupies 20 to 53 (DDPRDEPDTVVRGGKLFSRARDEMNPAASKLNER). Disulfide bonds link cysteine 55-cysteine 73, cysteine 62-cysteine 77, and cysteine 72-cysteine 81. At glutamine 84 the chain carries Glutamine amide.

This sequence belongs to the conotoxin O1 family. Post-translationally, is not hydroxylated. Expressed by the venom duct.

It localises to the secreted. Omega-conotoxins act at presynaptic membranes, they bind and block voltage-gated calcium channels (Cav). The sequence is that of Omega-conotoxin-like Am6.5 from Conus amadis (Amadis cone).